Reading from the N-terminus, the 573-residue chain is MAWGHRATVCLVLLGVGLGLVIVVLAAVLSPRQASCGPGAFTRAAVAADSKICSDIGRAILQQRGSPVDAAIAALVCTGVVNPQSMGLGGGVVFTIYNASTGKVEIINARETVPASYDQGLLNQCKNVLPLGTGAQWIGVPGELRGYAEAHRRHGRLPWAQLFQPTIALLREGFRVPFILSQFLNNSILRPHLSASTLRQLFFNGTETLRSQDPFPWPALANTLETVAKEGAEVLYTGRLGRMLVEDIAKQGSLLTVQDLAAFQPEVVEPLEMPLGNYTLYSPPPPAGGAILSFILNVLKGFNFSAETVARPGGEVNMYHHLVETLKFAVGQRWRLWDPSSHPGIQNISRDLLREDLAQRIRQQIDGRGDHHQLSHYNLTGVRGNRMGTSHVSVLGEDGSAVAATSTINTPFGAMVYSPRTGILLNNELLDLCWRHMPTSPITPPPVPGERPPSSMVPSILVNKGQGSKLVIGGAGGELIISAVAQTIMNKLWLGFDLTEAIASPILHVNSKGHVEYEPKFNQEVQKGLQDRGQIQSQSQRPVFLNAVQAVFQEGPCVYAASDLRKAGKASGY.

The Cytoplasmic portion of the chain corresponds to 1-8; it reads MAWGHRAT. The helical; Signal-anchor for type II membrane protein transmembrane segment at 9–29 threads the bilayer; sequence VCLVLLGVGLGLVIVVLAAVL. Residues 30 to 573 lie on the Extracellular side of the membrane; sequence SPRQASCGPG…LRKAGKASGY (544 aa). N-linked (GlcNAc...) asparagine glycosylation occurs at N98. R110 contacts L-glutamate. 6 N-linked (GlcNAc...) asparagine glycosylation sites follow: N185, N204, N277, N303, N347, and N378. T389 functions as the Nucleophile in the catalytic mechanism. Residues T407, E428, and 454 to 455 each bind L-glutamate; that span reads SS.

It belongs to the gamma-glutamyltransferase family. Heterodimer composed of the light and heavy chains. The active site is located in the light chain. Post-translationally, cleaved by autocatalysis into a large and a small subunit. In terms of processing, glycosylated. Very low level of expression. Detected in spleen lymphocytes, medullary and paracortical thymic lymphocytes, lung interstitial cells, bronchial epithelium, proximal tubules in kidney, crypt cells in small intestine, neurons in brain stem and cerebral cortex and in Purkinje cells. As to expression, very low expression.

The protein resides in the membrane. It carries out the reaction glutathione + H2O = L-cysteinylglycine + L-glutamate. The enzyme catalyses an S-substituted glutathione + H2O = an S-substituted L-cysteinylglycine + L-glutamate. It catalyses the reaction leukotriene C4 + H2O = leukotriene D4 + L-glutamate. The catalysed reaction is S-[(2E,6E,10E)-geranylgeranyl]-L-glutathione + H2O = S-[(2E,6E,10E)-geranylgeranyl]-L-cysteinylglycine + L-glutamate. It carries out the reaction an N-terminal (5-L-glutamyl)-[peptide] + an alpha-amino acid = 5-L-glutamyl amino acid + an N-terminal L-alpha-aminoacyl-[peptide]. The protein operates within lipid metabolism; leukotriene D4 biosynthesis. It functions in the pathway sulfur metabolism; glutathione metabolism. Its activity is regulated as follows. Inhibited by serine-borate. Its function is as follows. Cleaves the gamma-glutamyl bond of extracellular glutathione tripeptide (gamma-Glu-Cys-Gly) and certain glutathione conjugates. Hydrolyzes glutathione releasing L-Glu and Cys-Gly dipeptide which is further metabolized to maintain extracellular cysteine levels but also to provide cysteine necessary for intracellular glutathione synthesis. Among glutathione-S-conjugates metabolizes leukotriene C4 (LTC4) and S-geranylgeranyl-glutathione (GGG), but is inactive toward gamma-glutamyl leucine. Converts extracellular LTC4 to LTD4 during acute inflammatory response. Acts as a negative regulator of GGG bioactivity. GGT5 (via GGG catabolism) and ABCC1 (via extracellular transport) establish GGG gradients within lymphoid tissues to position P2RY8-positive lymphocytes at germinal centers in lymphoid follicles and restrict their chemotactic transmigration from blood vessels to bone marrow parenchyma. The transpeptidation reaction, i.e. the transfer of gamma-glutamyl moiety to an acceptor molecule to yield a new gamma-glutamyl compound requires high concentration of dipeptide acceptor and is considered nonphysiological. This is Glutathione hydrolase 5 proenzyme (Ggt5) from Mus musculus (Mouse).